Consider the following 449-residue polypeptide: Putative F-box/LRR-repeat protein At3g44090 (449 aa).

Positions 23–77 (LASMDCLPDDLLVQILYFLPTKEAISTSLLSKRWRTLYSLVHNLDLDDYIFWHHE) constitute an F-box domain. 6 LRR repeats span residues 133-163 (YYNL…SLGT), 186-212 (YIWF…TIHH), 214-231 (FRPF…SVTI), 247-278 (TPNV…ELDL), 286-311 (RQVQ…HLTY), and 320-345 (SKKR…VLSG).

The protein is Putative F-box/LRR-repeat protein At3g44090 of Arabidopsis thaliana (Mouse-ear cress).